The primary structure comprises 214 residues: Nucleoside triphosphate pyrophosphatase (214 aa).

Residue aspartate 79 is the Proton acceptor of the active site.

It belongs to the Maf family. A divalent metal cation is required as a cofactor.

It localises to the cytoplasm. The enzyme catalyses a ribonucleoside 5'-triphosphate + H2O = a ribonucleoside 5'-phosphate + diphosphate + H(+). The catalysed reaction is a 2'-deoxyribonucleoside 5'-triphosphate + H2O = a 2'-deoxyribonucleoside 5'-phosphate + diphosphate + H(+). Nucleoside triphosphate pyrophosphatase. May have a dual role in cell division arrest and in preventing the incorporation of modified nucleotides into cellular nucleic acids. The protein is Nucleoside triphosphate pyrophosphatase of Rhodococcus opacus (strain B4).